The primary structure comprises 239 residues: Probable transcriptional regulatory protein RBAM_007230 (239 aa).

Belongs to the TACO1 family. YeeN subfamily.

Its subcellular location is the cytoplasm. In Bacillus velezensis (strain DSM 23117 / BGSC 10A6 / LMG 26770 / FZB42) (Bacillus amyloliquefaciens subsp. plantarum), this protein is Probable transcriptional regulatory protein RBAM_007230.